The sequence spans 319 residues: HTH-type transcriptional regulator YidZ (319 aa).

An HTH lysR-type domain is found at 8-65 (LDLNLLLCLQLLMQERSVTKAAKRMNVTPSAVSKSLAKLRAWFDDPLFVNSPLGLSPT). The H-T-H motif DNA-binding region spans 25 to 44 (VTKAAKRMNVTPSAVSKSLA).

It belongs to the LysR transcriptional regulatory family.

Its function is as follows. Involved in anaerobic NO protection. This Escherichia coli O157:H7 (strain EC4115 / EHEC) protein is HTH-type transcriptional regulator YidZ.